Consider the following 152-residue polypeptide: Superoxide dismutase [Cu-Zn] 2 (152 aa).

The Cu cation site is built by His-45, His-47, and His-62. A disulfide bridge connects residues Cys-56 and Cys-145. Zn(2+) contacts are provided by His-62, His-70, His-79, and Asp-82. His-119 serves as a coordination point for Cu cation.

It belongs to the Cu-Zn superoxide dismutase family. As to quaternary structure, homodimer. Cu cation is required as a cofactor. Zn(2+) serves as cofactor.

The protein localises to the cytoplasm. It carries out the reaction 2 superoxide + 2 H(+) = H2O2 + O2. Destroys radicals which are normally produced within the cells and which are toxic to biological systems. In Oryza sativa subsp. japonica (Rice), this protein is Superoxide dismutase [Cu-Zn] 2 (SODCC2).